The following is a 61-amino-acid chain: Small ribosomal subunit protein uS14 (61 aa).

Residues cysteine 24, cysteine 27, cysteine 40, and cysteine 43 each contribute to the Zn(2+) site.

The protein belongs to the universal ribosomal protein uS14 family. Zinc-binding uS14 subfamily. In terms of assembly, part of the 30S ribosomal subunit. Contacts proteins S3 and S10. Zn(2+) is required as a cofactor.

Its function is as follows. Binds 16S rRNA, required for the assembly of 30S particles and may also be responsible for determining the conformation of the 16S rRNA at the A site. The chain is Small ribosomal subunit protein uS14 from Thermodesulfovibrio yellowstonii (strain ATCC 51303 / DSM 11347 / YP87).